The sequence spans 545 residues: 4-coumarate--CoA ligase 1 (545 aa).

ATP-binding residues include S192, S193, G194, T195, T196, and K200. (E)-4-coumaroyl-AMP contacts are provided by Y242 and S246. K263 contacts CoA. The SBD1 stretch occupies residues 265–334 (DIAQFLELIP…AKFPNAKLGQ (70 aa)). (E)-4-coumaroyl-AMP contacts are provided by A312, Q334, G335, T339, and M347. Residues Q334, G335, and T339 each coordinate ATP. The segment at 335–402 (GYGMTEAGPV…IRGDQIMKGY (68 aa)) is SBD2. Residues D423 and R438 each contribute to the ATP site. (E)-4-coumaroyl-AMP contacts are provided by K440 and K444. Positions 446 and 447 each coordinate CoA. K529 is a binding site for ATP.

It belongs to the ATP-dependent AMP-binding enzyme family. Mg(2+) serves as cofactor.

It carries out the reaction (E)-4-coumarate + ATP + CoA = (E)-4-coumaroyl-CoA + AMP + diphosphate. The catalysed reaction is (E)-4-coumarate + ATP + H(+) = (E)-4-coumaroyl-AMP + diphosphate. It catalyses the reaction (E)-4-coumaroyl-AMP + CoA = (E)-4-coumaroyl-CoA + AMP + H(+). It functions in the pathway phytoalexin biosynthesis; 3,4',5-trihydroxystilbene biosynthesis; 3,4',5-trihydroxystilbene from trans-4-coumarate: step 1/2. In terms of biological role, carboxylate--CoA ligase that may use 4-coumarate as substrate. Follows a two-step reaction mechanism, wherein the carboxylate substrate first undergoes adenylation by ATP, followed by a thioesterification in the presence of CoA to yield the final CoA thioester. The polypeptide is 4-coumarate--CoA ligase 1 (4CL1) (Solanum tuberosum (Potato)).